Reading from the N-terminus, the 362-residue chain is Fructose-bisphosphate aldolase (362 aa).

Ser-65 is a D-glyceraldehyde 3-phosphate binding site. Asp-112 functions as the Proton donor in the catalytic mechanism. Positions 113, 147, 177, and 229 each coordinate Zn(2+). Position 230 (Gly-230) interacts with dihydroxyacetone phosphate. A Zn(2+)-binding site is contributed by His-268. Dihydroxyacetone phosphate contacts are provided by residues 269 to 271 (GGS) and 290 to 293 (NVDT).

The protein belongs to the class II fructose-bisphosphate aldolase family. As to quaternary structure, homodimer. The cofactor is Zn(2+).

It catalyses the reaction beta-D-fructose 1,6-bisphosphate = D-glyceraldehyde 3-phosphate + dihydroxyacetone phosphate. Its pathway is carbohydrate degradation; glycolysis; D-glyceraldehyde 3-phosphate and glycerone phosphate from D-glucose: step 4/4. Catalyzes the aldol condensation of dihydroxyacetone phosphate (DHAP or glycerone-phosphate) with glyceraldehyde 3-phosphate (G3P) to form fructose 1,6-bisphosphate (FBP) in gluconeogenesis and the reverse reaction in glycolysis. This Aspergillus oryzae (strain ATCC 42149 / RIB 40) (Yellow koji mold) protein is Fructose-bisphosphate aldolase (fbaA).